The primary structure comprises 519 residues: Serine/threonine-protein kinase RIO3 (519 aa).

2 positions are modified to phosphoserine: Ser-8 and Ser-112. Residues 121–159 (PYEDSDSSEDEVDWQDTRDDPYRPAKPVPTPKKGFIGKG) form a disordered region. Residue Tyr-122 is modified to Phosphotyrosine. Residues 124 to 134 (DSDSSEDEVDW) show a composition bias toward acidic residues. Residues Ser-125, Ser-127, and Ser-128 each carry the phosphoserine modification. The Protein kinase domain occupies 251–519 (ETITGCISTG…DGDPPLLYDE (269 aa)). Residues 257–265 (ISTGKESVV) and Lys-290 contribute to the ATP site. Asp-406 (proton acceptor) is an active-site residue.

Belongs to the protein kinase superfamily. RIO-type Ser/Thr kinase family. In terms of assembly, interacts with CASP10. Interacts with IRF3; RIOK3 probably mediates the interaction of TBK1 with IRF3. Associated with 40S pre-ribosomal particles. Mg(2+) serves as cofactor. In terms of processing, autophosphorylated (in vitro). Widely expressed.

It localises to the cytoplasm. It catalyses the reaction L-seryl-[protein] + ATP = O-phospho-L-seryl-[protein] + ADP + H(+). The catalysed reaction is L-threonyl-[protein] + ATP = O-phospho-L-threonyl-[protein] + ADP + H(+). Functionally, involved in regulation of type I interferon (IFN)-dependent immune response which plays a critical role in the innate immune response against DNA and RNA viruses. May act as an adapter protein essential for the recruitment of TBK1 to IRF3. Phosphorylates IFIH1 on 'Ser-828' interfering with IFIH1 filament assembly on long dsRNA and resulting in attenuated IFIH1-signaling. Can inhibit CASP10 isoform 7-mediated activation of the NF-kappaB signaling pathway. May play a role in the biogenesis of the 40S ribosomal subunit. Involved in the processing of 21S pre-rRNA to the mature 18S rRNA. This is Serine/threonine-protein kinase RIO3 (RIOK3) from Homo sapiens (Human).